The chain runs to 301 residues: tRNA uridine(34) hydroxylase (301 aa).

In terms of domain architecture, Rhodanese spans 120–214 (SAPDVAVIDT…YLEDVPEDQS (95 aa)). Cysteine 174 acts as the Cysteine persulfide intermediate in catalysis.

It belongs to the TrhO family.

The enzyme catalyses uridine(34) in tRNA + AH2 + O2 = 5-hydroxyuridine(34) in tRNA + A + H2O. Functionally, catalyzes oxygen-dependent 5-hydroxyuridine (ho5U) modification at position 34 in tRNAs. The sequence is that of tRNA uridine(34) hydroxylase from Jannaschia sp. (strain CCS1).